Here is a 578-residue protein sequence, read N- to C-terminus: Zinc finger protein 248 (578 aa).

The 71-residue stretch at 8–78 folds into the KRAB domain; that stretch reads VSFKDVCVDF…LEKGFPSQDP (71 aa). The C2H2-type 1; degenerate zinc finger occupies 239–263; sequence TVCKYNECGRTFIESLKLNISQRPH. K340 is covalently cross-linked (Glycyl lysine isopeptide (Lys-Gly) (interchain with G-Cter in SUMO2)). C2H2-type zinc fingers lie at residues 379-401, 407-429, 435-457, 463-485, 491-513, 519-542, and 547-569; these read FECGECGKTFWEKSNLTQHQRTH, YECTECGKAFCQKPHLTNHQRTH, YECKQCGKTFCVKSNLTEHQRTH, YECNACGKSFCHRSALTVHQRTH, FICNECGKSFCVKSNLIVHQRTH, YKCNECGKTFCEKSALTKHQRTHT, and YECNACGKTFSQRSVLTKHQRIH.

Belongs to the krueppel C2H2-type zinc-finger protein family.

It localises to the nucleus. Its function is as follows. May be involved in transcriptional regulation. This chain is Zinc finger protein 248 (ZNF248), found in Pongo abelii (Sumatran orangutan).